The following is a 513-amino-acid chain: ATP synthase subunit alpha (513 aa).

ATP is bound at residue 169–176 (GDRQTGKT).

Belongs to the ATPase alpha/beta chains family. As to quaternary structure, F-type ATPases have 2 components, CF(1) - the catalytic core - and CF(0) - the membrane proton channel. CF(1) has five subunits: alpha(3), beta(3), gamma(1), delta(1), epsilon(1). CF(0) has three main subunits: a(1), b(2) and c(9-12). The alpha and beta chains form an alternating ring which encloses part of the gamma chain. CF(1) is attached to CF(0) by a central stalk formed by the gamma and epsilon chains, while a peripheral stalk is formed by the delta and b chains.

The protein resides in the cell inner membrane. It carries out the reaction ATP + H2O + 4 H(+)(in) = ADP + phosphate + 5 H(+)(out). In terms of biological role, produces ATP from ADP in the presence of a proton gradient across the membrane. The alpha chain is a regulatory subunit. The polypeptide is ATP synthase subunit alpha (Shewanella loihica (strain ATCC BAA-1088 / PV-4)).